The chain runs to 1029 residues: Putative B3 domain-containing protein Os03g0621600 (1029 aa).

3 consecutive DNA-binding regions (TF-B3) follow at residues 147–240 (DTYF…FDPS), 339–430 (VAVM…RKMK), and 450–543 (EKYF…FDPS). Positions 572 to 605 (TSYHDQPKGNKHWMQKDSSSKGNKIGNTRSSNTP) are disordered. Over residues 591-605 (SKGNKIGNTRSSNTP) the composition is skewed to polar residues. Residues 731–824 (YKNFFKVMIG…KLKVLIFGPS (94 aa)) constitute a DNA-binding region (TF-B3 4). Over residues 852-867 (SSNSHDLPVKSPQNVS) the composition is skewed to polar residues. The segment at 852-882 (SSNSHDLPVKSPQNVSKSEKQWDSSEQENDT) is disordered. Positions 934-1029 (GCILRKSRVH…SMNVHIIPKK (96 aa)) form a DNA-binding region, TF-B3 5.

The protein resides in the nucleus. This Oryza sativa subsp. japonica (Rice) protein is Putative B3 domain-containing protein Os03g0621600.